Here is a 732-residue protein sequence, read N- to C-terminus: MGRREEMIAKIKELMLQPERIRNIGIAAHIDHGKTTLSDNLLAGAGMISEELAGKQLVLDFDEQEQARGITINAANVSMVHNYEGKDYLINLIDTPGHVDFGGDVTRAMRAIDGVIIVVDAVEGVMPQTETVVRQALREYVKPVLFINKVDRLIRELKLTPQQMMERFSKIIMDVNRLIQRYAPEEYKKKWMVRVEDGSVAFGSAYYNWALSVPFMQRTGVKFNEIIDLTLKGDNKTLRQRAPLHVVVLDMVVRHLPSPIEAQKYRIPHLWQGDINSKIGQAMLNCDPKGKMVMVITKIIIDKHAGEVATGRVWSGTVRSGQEVYLINSKRKGRIQQVGIYMGPERINMEAVPAGNIVAVTGLRDAMAGETVAEEQIEPFEALHYVSEPVVTVAIEAKNVKDLPRLIEALRQLAKEDPTLHVKIDEETGQHLLSGMGELHLEVKLYKLQKDWGIEVDVSEPIVVYRESITKPSPIVEGKSPNKHNRFYVVVEPMPDEIYQAIKEGIIPEGRVKDPKAVAKKLAELGMDYDIARGVVDIYNGNMFLDNTKGIQYLNEVMDLLIDGFHQAMDEGPLAKEPVMKVIVRLVDAQVHEDNVHRGPAQIYPAIRTAIHCAMMKAGPVLYEPYQKVIINIPYEYMGAVSREISQRRGQLIDMRQEGEVMTIIAEAPVAEMFGFAGAIRSATSGRALWSTEHAGFKRVPNELAQQIIRQIRQRKGLDPNPPTEKDVCPLF.

The tr-type G domain occupies 19–260 (ERIRNIGIAA…MVVRHLPSPI (242 aa)). GTP is bound by residues 28-35 (AHIDHGKT), 94-98 (DTPGH), and 148-151 (NKVD). A Diphthamide modification is found at histidine 597.

The protein belongs to the TRAFAC class translation factor GTPase superfamily. Classic translation factor GTPase family. EF-G/EF-2 subfamily.

The protein resides in the cytoplasm. Functionally, catalyzes the GTP-dependent ribosomal translocation step during translation elongation. During this step, the ribosome changes from the pre-translocational (PRE) to the post-translocational (POST) state as the newly formed A-site-bound peptidyl-tRNA and P-site-bound deacylated tRNA move to the P and E sites, respectively. Catalyzes the coordinated movement of the two tRNA molecules, the mRNA and conformational changes in the ribosome. In Pyrococcus furiosus (strain ATCC 43587 / DSM 3638 / JCM 8422 / Vc1), this protein is Elongation factor 2 (fusA).